A 460-amino-acid chain; its full sequence is Probable lipase C14C8.15 (460 aa).

Over 1-16 the chain is Cytoplasmic; sequence MTLNGNIMKYCLEKGE. A helical; Signal-anchor for type II membrane protein transmembrane segment spans residues 17–37; sequence ILISFLLIALESMFRICTVIL. At 38 to 460 the chain is on the lumenal side; that stretch reads PSPLRNWFYE…LVDGVMNHTI (423 aa). The Nucleophile role is filled by serine 214. N-linked (GlcNAc...) asparagine glycosylation occurs at asparagine 308. Active-site charge relay system residues include aspartate 382 and histidine 408. A glycan (N-linked (GlcNAc...) asparagine) is linked at asparagine 457.

This sequence belongs to the AB hydrolase superfamily. Lipase family.

It localises to the golgi apparatus. It is found in the membrane. Its function is as follows. Probable lipase. The chain is Probable lipase C14C8.15 from Schizosaccharomyces pombe (strain 972 / ATCC 24843) (Fission yeast).